The chain runs to 1476 residues: Membrane-associated guanylate kinase, WW and PDZ domain-containing protein 3 (1476 aa).

The 91-residue stretch at 18-108 (CAVSWAGPPG…PIRLKTVKPG (91 aa)) folds into the PDZ 1 domain. The interval 18–108 (CAVSWAGPPG…PIRLKTVKPG (91 aa)) is interaction with ADRB1 and TGFA. The 175-residue stretch at 116-290 (RHYLSLQFQK…SSMDFRNYMM (175 aa)) folds into the Guanylate kinase-like domain. 123–130 (FQKGSIDH) provides a ligand contact to ATP. Residues 184-266 (TYDGNFYGTP…ETREMHSETS (83 aa)) form a disordered region. Pro residues predominate over residues 193-204 (PKPPAEPSPFQP). Ser236 carries the post-translational modification Phosphoserine. A compositionally biased stretch (acidic residues) spans 238-247 (LPEEEEDEDK). WW domains are found at residues 296–329 (EPLPKNWEMAYTDTGMIYFIDHNTKTTTWLDPRL) and 342–375 (GELPYGWEKIEDPQYGTYYVDHLNQKTQFENPVE). The PDZ 2 domain occupies 413-495 (RASLKKSTMG…NQYVNLTLCR (83 aa)). The tract at residues 413-495 (RASLKKSTMG…NQYVNLTLCR (83 aa)) is interaction with PTEN. Residues 551–575 (LASDRLNGPSESSEQRASLASSGSS) are disordered. Residues 559–575 (PSESSEQRASLASSGSS) show a composition bias toward polar residues. The PDZ 3 domain maps to 581–657 (TIPLIKGPKG…GADVPLLILR (77 aa)). Ser598 is subject to Phosphoserine. Residues 664 to 691 (TKTAKTKTDTKENSGSLETINEPIPQPM) form a disordered region. The residue at position 702 (Ser702) is a Phosphoserine. Positions 729–811 (DVFLRKQESG…NGHVLLTVRR (83 aa)) constitute a PDZ 4 domain. The tract at residues 729 to 811 (DVFLRKQESG…NGHVLLTVRR (83 aa)) is interaction with ADGRB1. Residues 818 to 844 (KQPEDESHQAFSQNGSPRLNRAELPTR) are disordered. Ser833 and Ser916 each carry phosphoserine. Positions 852–939 (DVTLQRKENE…TVTLTVVAEE (88 aa)) constitute a PDZ 5 domain. The tract at residues 852–939 (DVTLQRKENE…TVTLTVVAEE (88 aa)) is interaction with LPAR2 and GRIN2B. A disordered region spans residues 939 to 966 (EEHHGPPSGTNSARQSPALQHRPMGQAQ). Polar residues predominate over residues 946–956 (SGTNSARQSPA). The PDZ 6 domain occupies 1022–1104 (PVELERGPRG…KVLLLLRPGT (83 aa)). Disordered regions lie at residues 1109 to 1151 (DHGD…ATED) and 1168 to 1476 (TVQE…DKQL). A compositionally biased stretch (polar residues) spans 1114 to 1123 (DTNSPSSSNV). Composition is skewed to basic and acidic residues over residues 1193–1211 (SKKDPPRGSGHGEKSRLKG) and 1230–1265 (RHSEEHLEKIPRPLKSDPKEKSRDRSLSPRKGESKG). A compositionally biased stretch (polar residues) spans 1285 to 1304 (SSSPKKQQKIGGNSLSNTEG). Basic and acidic residues-rich tracts occupy residues 1317 to 1340 (HPRDSTEQLPDGREKSGVSRKDLK) and 1350 to 1361 (KSPEKKSSKVDE). The residue at position 1321 (Ser1321) is a Phosphoserine. Residues 1363–1373 (SLPSKKTSSTA) show a composition bias toward polar residues. Positions 1419–1437 (ADDHKGRESEVTDRCRERA) are enriched in basic and acidic residues.

This sequence belongs to the MAGUK family. In terms of assembly, interacts with ADRB1, ADGRB1, LPAR2/EDG4, GRIN2B, PTEN, and PTPRB. Interacts with unidentified tyrosine phosphorylated proteins. Interacts with FZD4, FZD7, TGFA and VANGL2. Interacts with DLL1. Interacts with PRRG4 (via cytoplasmic domain). As to expression, widely expressed. Colocalizes with TGFA in neurons in the cortex and dentate gyrus, as well as in ependymal cells and some astrocytes (at protein level). Present in lens epithelium.

The protein resides in the cell membrane. It localises to the cell junction. Its subcellular location is the tight junction. It is found in the nucleus. Its function is as follows. Acts as a scaffolding protein at cell-cell junctions, thereby regulating various cellular and signaling processes. Cooperates with PTEN to modulate the kinase activity of AKT1. Its interaction with PTPRB and tyrosine phosphorylated proteins suggests that it may link receptor tyrosine phosphatase with its substrates at the plasma membrane. In polarized epithelial cells, involved in efficient trafficking of TGFA to the cell surface. Regulates the ability of LPAR2 to activate ERK and RhoA pathways. Regulates the JNK signaling cascade via its interaction with FZD4 and VANGL2. This Mus musculus (Mouse) protein is Membrane-associated guanylate kinase, WW and PDZ domain-containing protein 3 (Magi3).